The chain runs to 179 residues: Warthog protein 3 (179 aa).

The N-terminal stretch at 1 to 19 is a signal peptide; it reads MLYHVEMFTIILLFGFSLA. 2 N-linked (GlcNAc...) asparagine glycosylation sites follow: N52 and N147.

In terms of tissue distribution, expressed in the trinucleate pharyngeal gland cell g1, seam cells and hypodermis.

The protein localises to the secreted. Its function is as follows. Intercellular signal essential for a variety of patterning events during development. This chain is Warthog protein 3 (wrt-3), found in Caenorhabditis elegans.